Here is a 435-residue protein sequence, read N- to C-terminus: Serine/threonine-protein kinase 40 (435 aa).

One can recognise a Protein kinase domain in the interval 35–332 (FILGPRLGNS…EELDSLSSII (298 aa)). Residues 41–49 (LGNSPVPSI) and K66 contribute to the ATP site. D197 acts as the Proton acceptor in catalysis.

Belongs to the protein kinase superfamily. CAMK Ser/Thr protein kinase family.

It is found in the nucleus. The protein localises to the cytoplasm. It carries out the reaction L-seryl-[protein] + ATP = O-phospho-L-seryl-[protein] + ADP + H(+). The catalysed reaction is L-threonyl-[protein] + ATP = O-phospho-L-threonyl-[protein] + ADP + H(+). Its function is as follows. May be a negative regulator of NF-kappa-B and p53-mediated gene transcription. This chain is Serine/threonine-protein kinase 40 (STK40), found in Gallus gallus (Chicken).